A 146-amino-acid chain; its full sequence is Interleukin-3 (146 aa).

A signal peptide spans 1–17 (MSSLSILHLLLLLLSLH). N65 carries N-linked (GlcNAc...) asparagine glycosylation.

The protein belongs to the IL-3 family. Monomer. Activated T-cells, mast cells, natural killer cells.

The protein resides in the secreted. Functionally, granulocyte/macrophage colony-stimulating factors are cytokines that act in hematopoiesis by controlling the production, differentiation, and function of 2 related white cell populations of the blood, the granulocytes and the monocytes-macrophages. Its function is as follows. This CSF induces granulocytes, macrophages, mast cells, stem cells, erythroid cells, eosinophils and megakaryocytes. The polypeptide is Interleukin-3 (IL3) (Ovis aries (Sheep)).